The following is a 165-amino-acid chain: LOB domain-containing protein 21 (165 aa).

The LOB domain maps to 10–111; it reads SSCAACKLLK…HDLAVARTRL (102 aa).

Belongs to the LOB domain-containing protein family.

The sequence is that of LOB domain-containing protein 21 (LBD21) from Arabidopsis thaliana (Mouse-ear cress).